Consider the following 590-residue polypeptide: Phenylalanine--tRNA ligase beta subunit (590 aa).

A B5 domain is found at 276 to 382; it reads MELDVWDVPV…IMYNYDRFEP (107 aa). The Mg(2+) site is built by N360, D366, E369, and D370.

The protein belongs to the phenylalanyl-tRNA synthetase beta subunit family. Type 2 subfamily. As to quaternary structure, tetramer of two alpha and two beta subunits. Mg(2+) serves as cofactor.

It localises to the cytoplasm. It carries out the reaction tRNA(Phe) + L-phenylalanine + ATP = L-phenylalanyl-tRNA(Phe) + AMP + diphosphate + H(+). The sequence is that of Phenylalanine--tRNA ligase beta subunit from Methanopyrus kandleri (strain AV19 / DSM 6324 / JCM 9639 / NBRC 100938).